Here is a 166-residue protein sequence, read N- to C-terminus: Large ribosomal subunit protein uL10 (166 aa).

The protein belongs to the universal ribosomal protein uL10 family. In terms of assembly, part of the ribosomal stalk of the 50S ribosomal subunit. The N-terminus interacts with L11 and the large rRNA to form the base of the stalk. The C-terminus forms an elongated spine to which L12 dimers bind in a sequential fashion forming a multimeric L10(L12)X complex.

Functionally, forms part of the ribosomal stalk, playing a central role in the interaction of the ribosome with GTP-bound translation factors. The chain is Large ribosomal subunit protein uL10 from Bacillus cereus (strain 03BB102).